The primary structure comprises 43 residues: Hemolysin H3C (43 aa).

N-formylmethionine is present on Met-1.

Belongs to the staphylococcal hemolytic protein family.

The protein resides in the secreted. Its function is as follows. Virulence factor. Causes hemolysis of erythrocytes from sheep (HD(50)=2.63 mM), rabbit (HD(50)=2.37 mM), guinea pig (HD(50)=1.98 mM), dog (HD(50)=1.02 mM) and human (HD(50)=2.07 mM). Acts synergistically with beta-hemolysins from S.aureus ATCC 25923. Cytotoxic towards human dermal fibroblasts. This chain is Hemolysin H3C, found in Staphylococcus cohnii subsp. cohnii.